The following is a 740-amino-acid chain: Ribosomal protein S6 kinase alpha-6 (740 aa).

Residues 67–326 (FELLKVLGQG…VEEIKRHTFF (260 aa)) form the Protein kinase 1 domain. ATP is bound by residues 73 to 81 (LGQGSFGKV) and Lys-99. Asp-192 acts as the Proton acceptor in catalysis. Residues 327-396 (STIDWNKLYR…VAPVSLEESK (70 aa)) form the AGC-kinase C-terminal domain. Residues 420–677 (YELKEDIGVG…AEQVLKHSWI (258 aa)) form the Protein kinase 2 domain. ATP is bound by residues 426–434 (IGVGSYSIC) and Lys-449. The Proton acceptor role is filled by Asp-537.

It belongs to the protein kinase superfamily. AGC Ser/Thr protein kinase family. S6 kinase subfamily. In terms of assembly, forms a complex with either ERK1 or ERK2 in quiescent cells. Transiently dissociates following mitogenic stimulation. Requires Mg(2+) as cofactor.

The catalysed reaction is L-seryl-[protein] + ATP = O-phospho-L-seryl-[protein] + ADP + H(+). It catalyses the reaction L-threonyl-[protein] + ATP = O-phospho-L-threonyl-[protein] + ADP + H(+). Its activity is regulated as follows. Activated by multiple phosphorylations on threonine and serine residues. In terms of biological role, serine/threonine kinase that may play a role in mediating the growth-factor and stress induced activation of the transcription factor CREB. The polypeptide is Ribosomal protein S6 kinase alpha-6 (rps6ka6) (Danio rerio (Zebrafish)).